A 503-amino-acid polypeptide reads, in one-letter code: LEM domain-containing protein 2 (503 aa).

At A2 the chain carries N-acetylalanine. The 41-residue stretch at 2-42 (AGLSDLELRRELQALGFQPGPITDTTRDVYRNKLRRLRGEA) folds into the LEM domain. Positions 42 to 74 (ARLRDEERLREEARPRGEERLREEARLREDAPL) are enriched in basic and acidic residues. Disordered stretches follow at residues 42-97 (ARLR…SGSA) and 127-157 (AQLR…GPGL). Residues 74 to 130 (LRARPAAASPRAEPWLSQPASGSAYATPGAYGDIRPSAASWVGSRGLAYPARPAQLR) are required for nuclear retention and interaction with LMNA isoform C. The segment covering 75 to 87 (RARPAAASPRAEP) has biased composition (low complexity). Residues S166 and S175 each carry the phosphoserine modification. The tract at residues 172–198 (LPSSLLGPDPRPGLRATRAGPAGAARA) is disordered. The span at 184–197 (GLRATRAGPAGAAR) shows a compositional bias: low complexity. The next 2 helical transmembrane spans lie at 213 to 233 (LLLW…WVKM) and 377 to 397 (VTNV…LILL). Residues 395–503 (ILLKYRWRKL…KPSSFSDSER (109 aa)) form a winged-Helix (WH) region. A phosphoserine mark is found at S497, S499, and S501.

As to quaternary structure, interacts (via N-terminus) with LMNA isoform C (via C-terminus) (in vitro). Interacts (via LEM domain) with BANF1. Interacts (via C-terminus) with CHMP7. Interacts (via N-terminus) with tubulin; the interaction causes microtubule bundling and stabilization (in vitro). Post-translationally, phosphorylated; strongly phosphorylated in mitosis compared to G1/S. As to expression, ubiquitously expressed, including bone marrow, brain, kidney, colon, skeletal muscle, thymus, testis and uterus.

It localises to the nucleus inner membrane. Its subcellular location is the nucleus envelope. The protein resides in the cytoplasm. It is found in the cytoskeleton. The protein localises to the spindle. Functionally, nuclear lamina-associated inner nuclear membrane protein that is involved in nuclear structure organization, maintenance of nuclear envelope (NE) integrity and NE reformation after mitosis. Plays a role as transmembrane adapter for the endosomal sorting complexes required for transport (ESCRT), and is thereby involved in ESCRT-mediated NE reformation. Promotes ESCRT-mediated NE closure by recruiting CHMP7 and downstream ESCRT-III proteins IST1/CHMP8 and CHMP2A to the reforming NE during anaphase. During nuclear reassembly, condenses into a liquid-like coating around microtubule spindles and coassembles with CHMP7 to form a macromolecular O-ring seal at the confluence between membranes, chromatin, and the spindle to facilitate early nuclear sealing. Plays a role in the organization of heterochromatin associated with the NE and in the maintenance of NE organization under mechanical stress. Required for embryonic development and involved in regulation of several signaling pathways such as MAPK and AKT. Required for myoblast differentiation involving regulation of ERK signaling. Essential for cardiac homeostasis and proper heart function. The sequence is that of LEM domain-containing protein 2 (LEMD2) from Homo sapiens (Human).